An 80-amino-acid chain; its full sequence is Toxin TdNa1 (80 aa).

An N-terminal signal peptide occupies residues Met1–Ser20. In terms of domain architecture, LCN-type CS-alpha/beta spans Arg21–His79. 4 disulfide bridges follow: Cys31/Cys78, Cys35/Cys57, Cys43/Cys62, and Cys47/Cys64.

It belongs to the long (4 C-C) scorpion toxin superfamily. Sodium channel inhibitor family. Beta subfamily. Expressed by the venom gland.

The protein localises to the secreted. Inhibits the sodium (Nav) currents in an apparent irreversible manner. Produces small depolarization and induces repetitive firing in squid axons. Is specific for arthropods (crickets, triatomides, crabs and squids), but is non-toxic to mice. This is Toxin TdNa1 from Tityus discrepans (Venezuelan scorpion).